We begin with the raw amino-acid sequence, 130 residues long: Small ribosomal subunit protein uS11c (130 aa).

Belongs to the universal ribosomal protein uS11 family. As to quaternary structure, part of the 30S ribosomal subunit.

It localises to the plastid. The protein resides in the chloroplast. This is Small ribosomal subunit protein uS11c from Spirogyra maxima (Green alga).